Here is a 514-residue protein sequence, read N- to C-terminus: Nuclear hormone receptor family member nhr-85 (514 aa).

The tract at residues 28–48 (TSFSSPPATSSSSLLSPSPSS) is disordered. Residues 110 to 186 (TILCQVCSDK…VGMSRDAVRF (77 aa)) constitute a DNA-binding region (nuclear receptor). 2 NR C4-type zinc fingers span residues 113-133 (CQVC…CEGC) and 150-174 (CTRA…LKKC). The NR LBD domain occupies 216–514 (QYENLTEVMH…VSPVPTTLSE (299 aa)). The segment at 465–514 (ERPRRISSSGAQEPLNLSLPHVRHQVKRDVDSDEQLEEMKVSPVPTTLSE) is disordered.

The protein belongs to the nuclear hormone receptor family.

It is found in the nucleus. Orphan nuclear receptor. This Caenorhabditis elegans protein is Nuclear hormone receptor family member nhr-85 (nhr-85).